A 275-amino-acid chain; its full sequence is Fructose-2,6-bisphosphatase TIGAR (275 aa).

H11 functions as the Tele-phosphohistidine intermediate in the catalytic mechanism. The active-site Proton donor/acceptor is E89.

It belongs to the phosphoglycerate mutase family.

It localises to the cytoplasm. The protein resides in the nucleus. Its subcellular location is the mitochondrion. It catalyses the reaction beta-D-fructose 2,6-bisphosphate + H2O = beta-D-fructose 6-phosphate + phosphate. In terms of biological role, fructose-bisphosphatase hydrolyzing fructose-2,6-bisphosphate as well as fructose-1,6-bisphosphate. Acts as a negative regulator of glycolysis by lowering intracellular levels of fructose-2,6-bisphosphate in a p53/TP53-dependent manner, resulting in the pentose phosphate pathway (PPP) activation and NADPH production. Contributes to the generation of reduced glutathione to cause a decrease in intracellular reactive oxygen species (ROS) content, correlating with its ability to protect cells from oxidative or metabolic stress-induced cell death. May play a role in mitophagy inhibition. The polypeptide is Fructose-2,6-bisphosphatase TIGAR (Xenopus tropicalis (Western clawed frog)).